Reading from the N-terminus, the 83-residue chain is Kunitz-type serine protease inhibitor tigerin-1 (83 aa).

Positions 1–24 (MSSGGLLLLLGLLTLWAELTPVSS) are cleaved as a signal peptide. The BPTI/Kunitz inhibitor domain maps to 31–81 (CELPADSGPCRGILHAFYYHPVHRTCLEFIYGGCYGNANNFKTIDECKRTC). 3 cysteine pairs are disulfide-bonded: cysteine 31–cysteine 81, cysteine 40–cysteine 64, and cysteine 56–cysteine 77.

This sequence belongs to the venom Kunitz-type family. As to expression, expressed by the venom gland.

The protein resides in the secreted. Functionally, serine protease inhibitor. This chain is Kunitz-type serine protease inhibitor tigerin-1, found in Notechis scutatus scutatus (Mainland tiger snake).